A 624-amino-acid chain; its full sequence is MNNKNKITHTFQSEVKELLHLMIHSLYSNKEIFLRELISNASDAIEKIRFEKLYSLKKYRENLYTPKIKISIKKDEKKIIISDNGIGMTYKEVIKNLGTIAKSGTKSFLNKIQNIEKKEKNDFIGQFGVGFYSSFIVSNSVSVYTRHAKEKKNIGTLWISEGKGKYSVEKISKEEHGTIVELSLKSSEKEFLEIWKIKNIIKKYSDHISIPIEIENYDEKTKTISWEKINKAQALWTINKNNITKKKYQDFYKYLTNDSEKPLLWSHNKVEGTQEYINLLYIPKKATWDIWHQENKHGLKLYVKHVFIMDEATQFLPNYLRFVKGIIDSQDLPLNISREILQDSSITHILRKSLTKRILNILNNLSENNIKKYQKFWNVFGIIIKEGIAEDSENKTILSNLLRFSSIKKGNIEQTLSLNEYIKNMKKNQKKIYFITSDSYKSALNSPNLEIFKENDIDVLILSEKIDEWMMNYLTEFNNIKFQSVSKLDDTIDSLLLKKNVSNEKNTFNEFIEKTKKILKNKVKDVKITYRLKNTPAIVLTDTNDMSTQMAKIFSAAGQPIPKIKYILEINPLHPLIKKIEKIKNEKDFSNWIKIIFDQSILSEKGSLENPHKFIQRINNFFIS.

The tract at residues 1–338 is a; substrate-binding; it reads MNNKNKITHT…SQDLPLNISR (338 aa). A b region spans residues 339–552; it reads EILQDSSITH…TNDMSTQMAK (214 aa). The c stretch occupies residues 553-624; it reads IFSAAGQPIP…IQRINNFFIS (72 aa).

This sequence belongs to the heat shock protein 90 family. Homodimer.

The protein localises to the cytoplasm. Its function is as follows. Molecular chaperone. Has ATPase activity. The chain is Chaperone protein HtpG from Buchnera aphidicola subsp. Cinara cedri (strain Cc).